Consider the following 227-residue polypeptide: ATP-dependent dethiobiotin synthetase BioD (227 aa).

ATP is bound at residue 13-18; it reads DIGKTY. Thr-17 contacts Mg(2+). Residue Lys-38 is part of the active site. Ser-42 provides a ligand contact to substrate. Residues Asp-55, 116–119, and 179–180 contribute to the ATP site; these read EGSG and NN. The Mg(2+) site is built by Asp-55 and Glu-116.

The protein belongs to the dethiobiotin synthetase family. As to quaternary structure, homodimer. Requires Mg(2+) as cofactor.

It localises to the cytoplasm. The enzyme catalyses (7R,8S)-7,8-diammoniononanoate + CO2 + ATP = (4R,5S)-dethiobiotin + ADP + phosphate + 3 H(+). It functions in the pathway cofactor biosynthesis; biotin biosynthesis; biotin from 7,8-diaminononanoate: step 1/2. In terms of biological role, catalyzes a mechanistically unusual reaction, the ATP-dependent insertion of CO2 between the N7 and N8 nitrogen atoms of 7,8-diaminopelargonic acid (DAPA, also called 7,8-diammoniononanoate) to form a ureido ring. The polypeptide is ATP-dependent dethiobiotin synthetase BioD (Clostridium botulinum (strain ATCC 19397 / Type A)).